An 85-amino-acid chain; its full sequence is Large ribosomal subunit protein bL27 (85 aa).

The span at methionine 1–threonine 10 shows a compositional bias: gly residues. The interval methionine 1–methionine 20 is disordered.

This sequence belongs to the bacterial ribosomal protein bL27 family.

The polypeptide is Large ribosomal subunit protein bL27 (Acidovorax ebreus (strain TPSY) (Diaphorobacter sp. (strain TPSY))).